Consider the following 219-residue polypeptide: Chloramphenicol acetyltransferase (219 aa).

Residue histidine 193 is the Proton acceptor of the active site.

Belongs to the chloramphenicol acetyltransferase family.

The enzyme catalyses chloramphenicol + acetyl-CoA = chloramphenicol 3-acetate + CoA. In terms of biological role, this enzyme is an effector of chloramphenicol resistance in bacteria. This chain is Chloramphenicol acetyltransferase (cat), found in Acinetobacter calcoaceticus subsp. anitratus.